Here is a 372-residue protein sequence, read N- to C-terminus: Ribosomal RNA small subunit methyltransferase H (372 aa).

S-adenosyl-L-methionine-binding positions include 44–46 (GGH), Asp63, Leu97, Asp111, and Gln118. Residues 315–334 (RAAERLDPTAEQRRRTDRER) show a composition bias toward basic and acidic residues. The disordered stretch occupies residues 315 to 372 (RAAERLDPTAEQRRRTDRERYRRRVRAMHQPGTGSAVRRPTPGDDGTGTDEEGEGHDS). Over residues 361 to 372 (TGTDEEGEGHDS) the composition is skewed to acidic residues.

The protein belongs to the methyltransferase superfamily. RsmH family.

It localises to the cytoplasm. The catalysed reaction is cytidine(1402) in 16S rRNA + S-adenosyl-L-methionine = N(4)-methylcytidine(1402) in 16S rRNA + S-adenosyl-L-homocysteine + H(+). Specifically methylates the N4 position of cytidine in position 1402 (C1402) of 16S rRNA. The sequence is that of Ribosomal RNA small subunit methyltransferase H from Salinispora arenicola (strain CNS-205).